A 411-amino-acid polypeptide reads, in one-letter code: Putative competence-damage inducible protein (411 aa).

The protein belongs to the CinA family.

This is Putative competence-damage inducible protein from Caldicellulosiruptor saccharolyticus (strain ATCC 43494 / DSM 8903 / Tp8T 6331).